The chain runs to 995 residues: MNHSAPGNADKHGESLAARFAEAPHIAASTTDERRFESWLAELEPAQSARLEALLVQPFGRNILVGIAEFSPYLFDLVRADPLRLIRLLECDPDTHLAALIAEARGAVLAAPDEAEVMRLLRRMKAEAALLTALCDIGGVWPVMRVTSALTDVAVSSVQAALQYLLRQEAARGKLFPPNPEAPEEGCGLIVLAMGKMGAGELNYSSDIDLIVFFDPDATTLAPDIEPQPFFVRVTQGMARILQQRTYDGYVFRVDLRLRPDPSSTQVAISRDAALHYYEREGRTWERAAMIKARACAGDARAGEALLAEIAPFVWRKHLDFAALADVHDMKRQMQTYRGQSEVAVEGHNVKVGRGGIREIEFFAQTQQLIAGGRHPELRVRPTLAALDVLASSNWITLAARDELARAYEFLRRVEHRLQMVADEQTHALPDDREAVERFARFFGYPDREAFARDLLRQLEIVQGHYEKLFEGDDPTGTAKLPALDYSAGPDDPRLFQHLTTLGFKKPAAVAQTVRDWITGDYRVFRNEATRSAFIEFVPALIDGLALAEEPDRAVVAFDQFLGALQRGGRLITLLGQNRDLVALVALVLGAAPRLGEMLARQPQLMDGLIDPRFFGAMPDRRELSGRLAATVQDAASYEEFLDRLRLFGQESLFLIGTRILSGTVSAQQASTAFADVAEGVVHTVHDLVADRFAAQHGRIKGQETAIIAMGRLGSREMTASSDLDLILLYDFDSENPDSDGPKSLQGAHYFARFTQRLISAFTTRTNYGVLYEIDMRLRPSGRAGPVASSLASFADYQANEAWTWEHMALTRARVVSASAEFGERIAGVIRDVLTRRRDPATIANDVADMRRAIAQEKGETDYWDLKYAAGGMIDIDFIAQYLQLVHAHHKPDILDVSTLQVLDNAARLGVLPQSEAEILRAAARLYHDLTQILRLCVSDRFKPETAGTDLQRVMARAGDAPDFSSLEARVKETQSEVRRVFRALLEGTSPASAR.

Residues 1 to 474 form an adenylyl removase region; it reads MNHSAPGNAD…HYEKLFEGDD (474 aa). GlnE regions lie at residues 122–333 and 637–853; these read RRMK…MKRQ and SYEE…MRRA. The tract at residues 479–995 is adenylyl transferase; it reads AKLPALDYSA…LEGTSPASAR (517 aa).

This sequence belongs to the GlnE family. It depends on Mg(2+) as a cofactor.

The catalysed reaction is [glutamine synthetase]-O(4)-(5'-adenylyl)-L-tyrosine + phosphate = [glutamine synthetase]-L-tyrosine + ADP. It catalyses the reaction [glutamine synthetase]-L-tyrosine + ATP = [glutamine synthetase]-O(4)-(5'-adenylyl)-L-tyrosine + diphosphate. Functionally, involved in the regulation of glutamine synthetase GlnA, a key enzyme in the process to assimilate ammonia. When cellular nitrogen levels are high, the C-terminal adenylyl transferase (AT) inactivates GlnA by covalent transfer of an adenylyl group from ATP to specific tyrosine residue of GlnA, thus reducing its activity. Conversely, when nitrogen levels are low, the N-terminal adenylyl removase (AR) activates GlnA by removing the adenylyl group by phosphorolysis, increasing its activity. The regulatory region of GlnE binds the signal transduction protein PII (GlnB) which indicates the nitrogen status of the cell. The protein is Bifunctional glutamine synthetase adenylyltransferase/adenylyl-removing enzyme of Bradyrhizobium diazoefficiens (strain JCM 10833 / BCRC 13528 / IAM 13628 / NBRC 14792 / USDA 110).